We begin with the raw amino-acid sequence, 210 residues long: Large ribosomal subunit protein uL3 (210 aa).

Residues 131–140 (NRASHGNSLS) show a composition bias toward polar residues. Residues 131 to 150 (NRASHGNSLSHRAPGSIGCR) form a disordered region. N5-methylglutamine is present on Gln151.

It belongs to the universal ribosomal protein uL3 family. Part of the 50S ribosomal subunit. Forms a cluster with proteins L14 and L19. Post-translationally, methylated by PrmB.

One of the primary rRNA binding proteins, it binds directly near the 3'-end of the 23S rRNA, where it nucleates assembly of the 50S subunit. The chain is Large ribosomal subunit protein uL3 from Acidithiobacillus ferrooxidans (strain ATCC 23270 / DSM 14882 / CIP 104768 / NCIMB 8455) (Ferrobacillus ferrooxidans (strain ATCC 23270)).